Reading from the N-terminus, the 569-residue chain is Glucose-6-phosphate isomerase, cytosolic 1A (569 aa).

Residue Glu-360 is the Proton donor of the active site. Residues His-391 and Lys-516 contribute to the active site.

This sequence belongs to the GPI family. In terms of assembly, homodimer.

It is found in the cytoplasm. It carries out the reaction alpha-D-glucose 6-phosphate = beta-D-fructose 6-phosphate. Its pathway is carbohydrate degradation; glycolysis; D-glyceraldehyde 3-phosphate and glycerone phosphate from D-glucose: step 2/4. The sequence is that of Glucose-6-phosphate isomerase, cytosolic 1A (PGIC1-A) from Clarkia lewisii (Farewell-to-spring).